Here is a 354-residue protein sequence, read N- to C-terminus: Glycerol-1-phosphate dehydrogenase [NAD(P)+] (354 aa).

Residues 102 to 106 (GRSID) and 124 to 127 (TAAS) contribute to the NAD(+) site. D129 lines the substrate pocket. Position 133 (S133) interacts with NAD(+). Position 176 (D176) interacts with substrate. Positions 176 and 256 each coordinate Zn(2+). H260 lines the substrate pocket. H272 contributes to the Zn(2+) binding site.

It belongs to the glycerol-1-phosphate dehydrogenase family. The cofactor is Zn(2+).

The protein localises to the cytoplasm. It carries out the reaction sn-glycerol 1-phosphate + NAD(+) = dihydroxyacetone phosphate + NADH + H(+). The enzyme catalyses sn-glycerol 1-phosphate + NADP(+) = dihydroxyacetone phosphate + NADPH + H(+). It participates in membrane lipid metabolism; glycerophospholipid metabolism. Catalyzes the NAD(P)H-dependent reduction of dihydroxyacetonephosphate (DHAP or glycerone phosphate) to glycerol 1-phosphate (G1P). The G1P thus generated is used as the glycerophosphate backbone of phospholipids in the cellular membranes of Archaea. The sequence is that of Glycerol-1-phosphate dehydrogenase [NAD(P)+] from Methanothrix thermoacetophila (strain DSM 6194 / JCM 14653 / NBRC 101360 / PT) (Methanosaeta thermophila).